The following is a 410-amino-acid chain: MSAHQDVKKVVLAYSGGLDTSVILRWLQKTYNCEVVTFTADLGQGEELEPARKKAEMFGVKEIFVEDLRETFVKDFVFPMFRANTLYEGQYLLGTSIARPLIAQRQIEIAEAVGADAVAHGATGKGNDQVRFELGYYSLKPDVKVIAPWREWDLTSRTKLLAFAEENQIPVTKDKRGEAPFSVDANLLHSSSEGKLLEDPSIGAEEIVFQRTISPEAAPDVATEITIDFVSGDPVAINGVEMTPATLLTRLNELGRDNGIGRLDIVENRFVGMKSRGIYETPGGTILLAAHRSIESITLDREAAHLKDSIMPRYAEIIYNGFWFSPERRMLQALIDTSQHSVTGRVRMRLYKGNVTCVGRESPHSLYDTRVVTFEDDEGAYNQQDAQGFIKLNALRLRLGGQIGRRGGTL.

ATP is bound by residues 13–21 (AYSGGLDTS) and Ala40. L-citrulline contacts are provided by Tyr91 and Ser96. Gly121 is a binding site for ATP. L-aspartate contacts are provided by Thr123, Asn127, and Asp128. Position 127 (Asn127) interacts with L-citrulline. Arg131, Ser182, Ser191, Glu267, and Tyr279 together coordinate L-citrulline.

This sequence belongs to the argininosuccinate synthase family. Type 1 subfamily. In terms of assembly, homotetramer.

Its subcellular location is the cytoplasm. It catalyses the reaction L-citrulline + L-aspartate + ATP = 2-(N(omega)-L-arginino)succinate + AMP + diphosphate + H(+). It functions in the pathway amino-acid biosynthesis; L-arginine biosynthesis; L-arginine from L-ornithine and carbamoyl phosphate: step 2/3. This chain is Argininosuccinate synthase, found in Gluconobacter oxydans (strain 621H) (Gluconobacter suboxydans).